A 72-amino-acid polypeptide reads, in one-letter code: Translation initiation factor IF-1 (72 aa).

Positions 1–72 (MAKDDVIQMQ…SRARIVFRAK (72 aa)) constitute an S1-like domain.

This sequence belongs to the IF-1 family. In terms of assembly, component of the 30S ribosomal translation pre-initiation complex which assembles on the 30S ribosome in the order IF-2 and IF-3, IF-1 and N-formylmethionyl-tRNA(fMet); mRNA recruitment can occur at any time during PIC assembly.

The protein localises to the cytoplasm. One of the essential components for the initiation of protein synthesis. Stabilizes the binding of IF-2 and IF-3 on the 30S subunit to which N-formylmethionyl-tRNA(fMet) subsequently binds. Helps modulate mRNA selection, yielding the 30S pre-initiation complex (PIC). Upon addition of the 50S ribosomal subunit IF-1, IF-2 and IF-3 are released leaving the mature 70S translation initiation complex. In Burkholderia thailandensis (strain ATCC 700388 / DSM 13276 / CCUG 48851 / CIP 106301 / E264), this protein is Translation initiation factor IF-1.